The primary structure comprises 292 residues: Ribosomal protein L11 methyltransferase (292 aa).

Positions 144, 165, 187, and 229 each coordinate S-adenosyl-L-methionine.

The protein belongs to the methyltransferase superfamily. PrmA family.

Its subcellular location is the cytoplasm. It carries out the reaction L-lysyl-[protein] + 3 S-adenosyl-L-methionine = N(6),N(6),N(6)-trimethyl-L-lysyl-[protein] + 3 S-adenosyl-L-homocysteine + 3 H(+). In terms of biological role, methylates ribosomal protein L11. This chain is Ribosomal protein L11 methyltransferase, found in Pseudomonas fluorescens (strain ATCC BAA-477 / NRRL B-23932 / Pf-5).